We begin with the raw amino-acid sequence, 239 residues long: Probable replication-associated protein repA2 (239 aa).

Belongs to the IncFII RepA family.

Its function is as follows. This protein is essential for plasmid replication; it is involved in copy control functions. This is Probable replication-associated protein repA2 (repA2) from Buchnera aphidicola subsp. Baizongia pistaciae (strain Bp).